The primary structure comprises 890 residues: DNA mismatch repair protein MutS (890 aa).

Residue 634 to 641 coordinates ATP; the sequence is GPNMGGKS.

Belongs to the DNA mismatch repair MutS family.

Functionally, this protein is involved in the repair of mismatches in DNA. It is possible that it carries out the mismatch recognition step. This protein has a weak ATPase activity. This chain is DNA mismatch repair protein MutS, found in Burkholderia pseudomallei (strain K96243).